The primary structure comprises 196 residues: UPF0319 protein VV0948 (196 aa).

The first 19 residues, 1 to 19 (MKKMMILSALALFSSSLFA), serve as a signal peptide directing secretion.

The protein belongs to the UPF0319 family.

The protein is UPF0319 protein VV0948 of Vibrio vulnificus (strain YJ016).